A 21-amino-acid chain; its full sequence is Dahlein-5.6 (21 aa).

As to expression, expressed by the skin dorsal glands.

The protein resides in the secreted. In terms of biological role, has no antimicrobial activity. Strongly inhibits the formation of NO by neuronal nitric oxide synthase at micromolar concentrations. This Ranoidea dahlii (Dahl's aquatic frog) protein is Dahlein-5.6.